Reading from the N-terminus, the 468-residue chain is 6-phospho-beta-galactosidase (468 aa).

D-galactose 6-phosphate contacts are provided by glutamine 19, histidine 116, asparagine 159, glutamate 160, and asparagine 297. Glutamate 160 functions as the Proton donor in the catalytic mechanism. The active-site Nucleophile is glutamate 375. Residues serine 428, tryptophan 429, lysine 435, and tyrosine 437 each contribute to the D-galactose 6-phosphate site.

The protein belongs to the glycosyl hydrolase 1 family.

The catalysed reaction is a 6-phospho-beta-D-galactoside + H2O = D-galactose 6-phosphate + an alcohol. The protein operates within carbohydrate metabolism; lactose degradation; D-galactose 6-phosphate and beta-D-glucose from lactose 6-phosphate: step 1/1. This chain is 6-phospho-beta-galactosidase, found in Streptococcus sanguinis (strain SK36).